The following is a 192-amino-acid chain: Elongation factor P (192 aa).

Belongs to the elongation factor P family.

It is found in the cytoplasm. It participates in protein biosynthesis; polypeptide chain elongation. Its function is as follows. Involved in peptide bond synthesis. Stimulates efficient translation and peptide-bond synthesis on native or reconstituted 70S ribosomes in vitro. Probably functions indirectly by altering the affinity of the ribosome for aminoacyl-tRNA, thus increasing their reactivity as acceptors for peptidyl transferase. In Borreliella burgdorferi (strain ATCC 35210 / DSM 4680 / CIP 102532 / B31) (Borrelia burgdorferi), this protein is Elongation factor P (efp).